We begin with the raw amino-acid sequence, 472 residues long: 2-methylcitrate synthase, mitochondrial (472 aa).

Residues 1 to 29 constitute a mitochondrion transit peptide; sequence MALNLTTSRRALGSLKPLTRAAFVGARGY. Residues arginine 75 and lysine 193 each coordinate CoA. Residue histidine 271 participates in oxaloacetate binding. Residue leucine 306 participates in CoA binding. Residue histidine 307 is part of the active site. Residues valine 348, glycine 350, and tyrosine 351 each contribute to the CoA site. Oxaloacetate contacts are provided by histidine 353 and arginine 362. The active site involves histidine 353. The CoA site is built by threonine 402, lysine 403, and asparagine 408. Aspartate 410 is an active-site residue. 2 residues coordinate oxaloacetate: arginine 436 and arginine 456.

It belongs to the citrate synthase family. Homodimer.

It localises to the mitochondrion matrix. It catalyses the reaction propanoyl-CoA + oxaloacetate + H2O = (2S,3S)-2-methylcitrate + CoA + H(+). The enzyme catalyses oxaloacetate + acetyl-CoA + H2O = citrate + CoA + H(+). The protein operates within organic acid metabolism; propanoate degradation. In terms of biological role, component of the methylcitrate cycle that catalyzes the synthesis of (2S,3S)-2-methylcitrate from propionyl-CoA and oxaloacetate. Plays an important role in detoxification of propionyl-CoA, an inhibitor of both primary and secondary metabolism. Also has citrate synthase activity using as substrates acetyl-CoA and oxaloacetate. In Fusarium solani (Filamentous fungus), this protein is 2-methylcitrate synthase, mitochondrial.